Here is a 178-residue protein sequence, read N- to C-terminus: Large ribosomal subunit protein uL6 (178 aa).

Belongs to the universal ribosomal protein uL6 family. In terms of assembly, part of the 50S ribosomal subunit.

In terms of biological role, this protein binds to the 23S rRNA, and is important in its secondary structure. It is located near the subunit interface in the base of the L7/L12 stalk, and near the tRNA binding site of the peptidyltransferase center. This chain is Large ribosomal subunit protein uL6, found in Streptococcus equi subsp. zooepidemicus (strain H70).